We begin with the raw amino-acid sequence, 443 residues long: Probable ribonuclease FAU-1 (443 aa).

The protein belongs to the FAU-1 family.

In terms of biological role, probable RNase involved in rRNA stability through maturation and/or degradation of precursor rRNAs. Binds to RNA in loop regions with AU-rich sequences. This chain is Probable ribonuclease FAU-1, found in Pyrobaculum aerophilum (strain ATCC 51768 / DSM 7523 / JCM 9630 / CIP 104966 / NBRC 100827 / IM2).